We begin with the raw amino-acid sequence, 426 residues long: tRNA(Ile)-lysidine synthase (426 aa).

27-32 contacts ATP; it reads SGGADS.

This sequence belongs to the tRNA(Ile)-lysidine synthase family.

It is found in the cytoplasm. The enzyme catalyses cytidine(34) in tRNA(Ile2) + L-lysine + ATP = lysidine(34) in tRNA(Ile2) + AMP + diphosphate + H(+). Functionally, ligates lysine onto the cytidine present at position 34 of the AUA codon-specific tRNA(Ile) that contains the anticodon CAU, in an ATP-dependent manner. Cytidine is converted to lysidine, thus changing the amino acid specificity of the tRNA from methionine to isoleucine. This Bacteroides thetaiotaomicron (strain ATCC 29148 / DSM 2079 / JCM 5827 / CCUG 10774 / NCTC 10582 / VPI-5482 / E50) protein is tRNA(Ile)-lysidine synthase.